Here is an 835-residue protein sequence, read N- to C-terminus: Protein translocase subunit SecA (835 aa).

ATP contacts are provided by residues Gln-85, Gly-103–Thr-107, and Asp-495. The segment at Lys-806 to Asn-835 is disordered. The span at Lys-820–Asn-835 shows a compositional bias: basic residues.

The protein belongs to the SecA family. Monomer and homodimer. Part of the essential Sec protein translocation apparatus which comprises SecA, SecYEG and auxiliary proteins SecDF. Other proteins may also be involved.

It localises to the cell membrane. It is found in the cytoplasm. It catalyses the reaction ATP + H2O + cellular proteinSide 1 = ADP + phosphate + cellular proteinSide 2.. Functionally, part of the Sec protein translocase complex. Interacts with the SecYEG preprotein conducting channel. Has a central role in coupling the hydrolysis of ATP to the transfer of proteins into and across the cell membrane, serving as an ATP-driven molecular motor driving the stepwise translocation of polypeptide chains across the membrane. The sequence is that of Protein translocase subunit SecA from Onion yellows phytoplasma (strain OY-M).